The chain runs to 379 residues: Deoxyuridine 5'-triphosphate nucleotidohydrolase (379 aa).

It belongs to the dUTPase family. Mg(2+) serves as cofactor.

It catalyses the reaction dUTP + H2O = dUMP + diphosphate + H(+). In terms of biological role, involved in nucleotide metabolism: produces dUMP, the immediate precursor of thymidine nucleotides and decreases the intracellular concentration of dUTP to avoid uracil incorporation into viral DNA. The polypeptide is Deoxyuridine 5'-triphosphate nucleotidohydrolase (Human herpesvirus 7 (strain JI) (HHV-7)).